A 290-amino-acid polypeptide reads, in one-letter code: Isopentenyl-diphosphate Delta-isomerase II (290 aa).

The region spanning 108 to 260 (MLHRAFTVFL…GLKLSPWFRL (153 aa)) is the Nudix hydrolase domain. Active-site residues include cysteine 145 and glutamate 207.

This sequence belongs to the IPP isomerase type 1 family.

It catalyses the reaction isopentenyl diphosphate = dimethylallyl diphosphate. Its pathway is isoprenoid biosynthesis; dimethylallyl diphosphate biosynthesis; dimethylallyl diphosphate from isopentenyl diphosphate: step 1/1. It participates in porphyrin-containing compound metabolism; chlorophyll biosynthesis. In terms of biological role, catalyzes the 1,3-allylic rearrangement of the homoallylic substrate isopentenyl (IPP) to its highly electrophilic allylic isomer, dimethylallyl diphosphate (DMAPP). This Clarkia xantiana (Gunsight clarkia) protein is Isopentenyl-diphosphate Delta-isomerase II (IPI2).